The chain runs to 689 residues: Glycine--tRNA ligase beta subunit (689 aa).

It belongs to the class-II aminoacyl-tRNA synthetase family. Tetramer of two alpha and two beta subunits.

The protein localises to the cytoplasm. It carries out the reaction tRNA(Gly) + glycine + ATP = glycyl-tRNA(Gly) + AMP + diphosphate. In Cronobacter sakazakii (strain ATCC BAA-894) (Enterobacter sakazakii), this protein is Glycine--tRNA ligase beta subunit.